A 189-amino-acid chain; its full sequence is Protein F29A7.6 (189 aa).

Residues lysine 124–asparagine 161 form a disordered region. Residues alanine 133–asparagine 161 show a composition bias toward basic and acidic residues.

It belongs to the MPP6 family.

In Caenorhabditis elegans, this protein is Protein F29A7.6.